The primary structure comprises 422 residues: Enolase 2 (422 aa).

Gln-162 is a (2R)-2-phosphoglycerate binding site. Glu-204 acts as the Proton donor in catalysis. Mg(2+) contacts are provided by Asp-241, Glu-285, and Asp-312. (2R)-2-phosphoglycerate contacts are provided by Lys-337, Arg-366, Ser-367, and Lys-388. The Proton acceptor role is filled by Lys-337.

This sequence belongs to the enolase family. The cofactor is Mg(2+).

The protein localises to the cytoplasm. Its subcellular location is the secreted. It localises to the cell surface. The enzyme catalyses (2R)-2-phosphoglycerate = phosphoenolpyruvate + H2O. It functions in the pathway carbohydrate degradation; glycolysis; pyruvate from D-glyceraldehyde 3-phosphate: step 4/5. In terms of biological role, catalyzes the reversible conversion of 2-phosphoglycerate (2-PG) into phosphoenolpyruvate (PEP). It is essential for the degradation of carbohydrates via glycolysis. In Lactococcus lactis subsp. lactis (strain IL1403) (Streptococcus lactis), this protein is Enolase 2.